The chain runs to 190 residues: Protein GrpE (190 aa).

Over residues 1-31 the composition is skewed to basic and acidic residues; it reads MTEEQKKYEDAENLESKSENPEEASAEKSEN. A disordered region spans residues 1 to 39; the sequence is MTEEQKKYEDAENLESKSENPEEASAEKSENGVEDLQAE.

The protein belongs to the GrpE family. In terms of assembly, homodimer.

It is found in the cytoplasm. Functionally, participates actively in the response to hyperosmotic and heat shock by preventing the aggregation of stress-denatured proteins, in association with DnaK and GrpE. It is the nucleotide exchange factor for DnaK and may function as a thermosensor. Unfolded proteins bind initially to DnaJ; upon interaction with the DnaJ-bound protein, DnaK hydrolyzes its bound ATP, resulting in the formation of a stable complex. GrpE releases ADP from DnaK; ATP binding to DnaK triggers the release of the substrate protein, thus completing the reaction cycle. Several rounds of ATP-dependent interactions between DnaJ, DnaK and GrpE are required for fully efficient folding. In Zymomonas mobilis subsp. mobilis (strain ATCC 31821 / ZM4 / CP4), this protein is Protein GrpE.